A 216-amino-acid chain; its full sequence is Endoplasmic reticulum vesicle protein 25 (216 aa).

The N-terminal stretch at 1–20 (MASLKSLLSGFLLLAGAAQA) is a signal peptide. Residues 21–185 (LKFDLEATSS…TNESTNNRVK (165 aa)) lie on the Lumenal side of the membrane. In terms of domain architecture, GOLD spans 36–126 (RRCIRNFVNK…RRHVELDIDI (91 aa)). Residues 186–206 (WFGMATTFLLIALWGWQIMYL) form a helical membrane-spanning segment. Residues 207-216 (RAYFRSKHLI) are Cytoplasmic-facing.

This sequence belongs to the EMP24/GP25L family.

The protein resides in the endoplasmic reticulum membrane. It localises to the golgi apparatus membrane. Constituent of COPII-coated endoplasmic reticulum-derived transport vesicles. Required for efficient transport of a subset of secretory proteins to the Golgi. Facilitates retrograde transport from the Golgi to the endoplasmic reticulum. The protein is Endoplasmic reticulum vesicle protein 25 (erv-1) of Neurospora crassa (strain ATCC 24698 / 74-OR23-1A / CBS 708.71 / DSM 1257 / FGSC 987).